A 282-amino-acid chain; its full sequence is 4-hydroxybenzoate octaprenyltransferase (282 aa).

A run of 9 helical transmembrane segments spans residues 17–37 (IGIL…NQGF), 40–60 (IDLL…GCVI), 90–110 (AFIL…KLPI), 113–133 (FYFA…KRFF), 135–155 (APQL…FIAS), 163–183 (FIVL…MYAM), 207–227 (LIIA…AINK), 231–251 (CFFY…LKLI), and 262–282 (AFLV…LALI).

This sequence belongs to the UbiA prenyltransferase family. The cofactor is Mg(2+).

Its subcellular location is the cell inner membrane. The enzyme catalyses all-trans-octaprenyl diphosphate + 4-hydroxybenzoate = 4-hydroxy-3-(all-trans-octaprenyl)benzoate + diphosphate. It participates in cofactor biosynthesis; ubiquinone biosynthesis. In terms of biological role, catalyzes the prenylation of para-hydroxybenzoate (PHB) with an all-trans polyprenyl group. Mediates the second step in the final reaction sequence of ubiquinone-8 (UQ-8) biosynthesis, which is the condensation of the polyisoprenoid side chain with PHB, generating the first membrane-bound Q intermediate 3-octaprenyl-4-hydroxybenzoate. This chain is 4-hydroxybenzoate octaprenyltransferase, found in Legionella pneumophila (strain Lens).